A 346-amino-acid polypeptide reads, in one-letter code: Phosphoribosylformylglycinamidine cyclo-ligase (346 aa).

It belongs to the AIR synthase family.

The protein resides in the cytoplasm. The catalysed reaction is 2-formamido-N(1)-(5-O-phospho-beta-D-ribosyl)acetamidine + ATP = 5-amino-1-(5-phospho-beta-D-ribosyl)imidazole + ADP + phosphate + H(+). It participates in purine metabolism; IMP biosynthesis via de novo pathway; 5-amino-1-(5-phospho-D-ribosyl)imidazole from N(2)-formyl-N(1)-(5-phospho-D-ribosyl)glycinamide: step 2/2. The polypeptide is Phosphoribosylformylglycinamidine cyclo-ligase (Erwinia tasmaniensis (strain DSM 17950 / CFBP 7177 / CIP 109463 / NCPPB 4357 / Et1/99)).